Here is a 641-residue protein sequence, read N- to C-terminus: SUMO-activating enzyme subunit 2-A (641 aa).

Residues Gly-24 to Gly-29, Asp-48, Asn-56 to Arg-59, Lys-72, Ser-95 to Ile-96, and Asp-117 to Arg-122 contribute to the ATP site. Zn(2+)-binding residues include Cys-158 and Cys-161. The active-site Glycyl thioester intermediate is the Cys-173. Zn(2+) contacts are provided by Cys-439 and Cys-442. The interval Gly-546–Asp-641 is disordered. Residues Val-548 to Val-561 are compositionally biased toward basic and acidic residues. The segment covering Lys-562 to Ala-579 has biased composition (polar residues). 2 stretches are compositionally biased toward acidic residues: residues Gln-582 to Ser-594 and Pro-630 to Asp-641.

Belongs to the ubiquitin-activating E1 family. As to quaternary structure, heterodimer of sae1 and uba2/sae2. The heterodimer corresponds to the two domains that are encoded on a single polypeptide chain in ubiquitin-activating enzyme E1. Interacts with ube2i.

It localises to the nucleus. It participates in protein modification; protein sumoylation. In terms of biological role, the heterodimer acts as an E1 ligase for sumo1, sumo2, and sumo3. It mediates ATP-dependent activation of sumo proteins followed by formation of a thioester bond between a sumo protein and a conserved active site cysteine residue on uba2/sae2. In Xenopus laevis (African clawed frog), this protein is SUMO-activating enzyme subunit 2-A (uba2-a).